The chain runs to 86 residues: EMBRYO SURROUNDING FACTOR 1-like protein 2 (86 aa).

An N-terminal signal peptide occupies residues 1-21; the sequence is MKSHIAIICIIMLSFFSMHEY. 4 cysteine pairs are disulfide-bonded: cysteine 39-cysteine 54, cysteine 44-cysteine 82, cysteine 52-cysteine 78, and cysteine 55-cysteine 65.

It belongs to the MEG family.

The sequence is that of EMBRYO SURROUNDING FACTOR 1-like protein 2 (ESFL2) from Arabidopsis thaliana (Mouse-ear cress).